A 353-amino-acid chain; its full sequence is Thiamine-phosphate synthase (353 aa).

A unknown region spans residues 1-128 (MKSMPFAPIA…AASAAAIRYG (128 aa)). A thiamine-phosphate synthase region spans residues 129 to 353 (LYDLEVTVLQ…TSLQLLEALR (225 aa)). 4-amino-2-methyl-5-(diphosphooxymethyl)pyrimidine-binding positions include 185–189 (QYRNK) and Asn-217. 2 residues coordinate Mg(2+): Asp-218 and Asp-237. Ser-256 is a 4-amino-2-methyl-5-(diphosphooxymethyl)pyrimidine binding site. 282–284 (TAT) is a 2-[(2R,5Z)-2-carboxy-4-methylthiazol-5(2H)-ylidene]ethyl phosphate binding site. Lys-285 contributes to the 4-amino-2-methyl-5-(diphosphooxymethyl)pyrimidine binding site. Gly-312 contributes to the 2-[(2R,5Z)-2-carboxy-4-methylthiazol-5(2H)-ylidene]ethyl phosphate binding site.

Belongs to the thiamine-phosphate synthase family. Mg(2+) serves as cofactor.

The catalysed reaction is 2-[(2R,5Z)-2-carboxy-4-methylthiazol-5(2H)-ylidene]ethyl phosphate + 4-amino-2-methyl-5-(diphosphooxymethyl)pyrimidine + 2 H(+) = thiamine phosphate + CO2 + diphosphate. The enzyme catalyses 2-(2-carboxy-4-methylthiazol-5-yl)ethyl phosphate + 4-amino-2-methyl-5-(diphosphooxymethyl)pyrimidine + 2 H(+) = thiamine phosphate + CO2 + diphosphate. It catalyses the reaction 4-methyl-5-(2-phosphooxyethyl)-thiazole + 4-amino-2-methyl-5-(diphosphooxymethyl)pyrimidine + H(+) = thiamine phosphate + diphosphate. Its pathway is cofactor biosynthesis; thiamine diphosphate biosynthesis; thiamine phosphate from 4-amino-2-methyl-5-diphosphomethylpyrimidine and 4-methyl-5-(2-phosphoethyl)-thiazole: step 1/1. Condenses 4-methyl-5-(beta-hydroxyethyl)thiazole monophosphate (THZ-P) and 2-methyl-4-amino-5-hydroxymethyl pyrimidine pyrophosphate (HMP-PP) to form thiamine monophosphate (TMP). The polypeptide is Thiamine-phosphate synthase (Prochlorococcus marinus (strain MIT 9313)).